Here is a 762-residue protein sequence, read N- to C-terminus: Lysyl oxidase homolog 2B (762 aa).

An N-terminal signal peptide occupies residues 1–20; the sequence is MLALWSISFVLLCSWRLSYA. SRCR domains are found at residues 53–154, 183–292, 316–417, and 427–536; these read LRLA…VVCS, IRPI…VSCI, VRLR…VKCN, and LRLS…VSCS. Intrachain disulfides connect cysteine 79-cysteine 143, cysteine 92-cysteine 153, cysteine 123-cysteine 133, cysteine 213-cysteine 281, cysteine 226-cysteine 291, cysteine 260-cysteine 270, cysteine 341-cysteine 406, cysteine 354-cysteine 416, and cysteine 385-cysteine 395. The N-linked (GlcNAc...) asparagine glycan is linked to asparagine 278. Residue asparagine 447 is glycosylated (N-linked (GlcNAc...) asparagine). 3 disulfide bridges follow: cysteine 456-cysteine 522, cysteine 469-cysteine 535, and cysteine 503-cysteine 513. The segment at 540–742 is lysyl-oxidase like; the sequence is PDLVLNPQVV…WMYNCHIGGS (203 aa). Positions 541 and 542 each coordinate Ca(2+). Cystine bridges form between cysteine 565–cysteine 616, cysteine 571–cysteine 686, cysteine 648–cysteine 664, and cysteine 654–cysteine 676. The Cu cation site is built by histidine 617, histidine 619, and histidine 621. N-linked (GlcNAc...) asparagine glycosylation occurs at asparagine 635. Residues 644-680 constitute a cross-link (lysine tyrosylquinone (Lys-Tyr)); sequence KASFCLEDSECDEGIEKRYECANFGEQGITVGCWDTY. Tyrosine 680 carries the 2',4',5'-topaquinone modification. The Ca(2+) site is built by glutamate 713, aspartate 715, asparagine 718, and asparagine 719. Cysteine 723 and cysteine 737 are oxidised to a cystine.

Belongs to the lysyl oxidase family. Requires Cu cation as cofactor. It depends on lysine tyrosylquinone residue as a cofactor. In terms of processing, the lysine tyrosylquinone cross-link (LTQ) is generated by condensation of the epsilon-amino group of a lysine with a topaquinone produced by oxidation of tyrosine.

It localises to the secreted. The protein localises to the extracellular space. The protein resides in the extracellular matrix. Its subcellular location is the basement membrane. It is found in the nucleus. It localises to the chromosome. The protein localises to the endoplasmic reticulum. It catalyses the reaction L-lysyl-[protein] + O2 + H2O = (S)-2-amino-6-oxohexanoyl-[protein] + H2O2 + NH4(+). Functionally, mediates the post-translational oxidative deamination of lysine residues on target proteins leading to the formation of deaminated lysine (allysine). Acts as a transcription corepressor and specifically mediates deamination of trimethylated 'Lys-4' of histone H3 (H3K4me3), a specific tag for epigenetic transcriptional activation. Shows no activity against histone H3 when it is trimethylated on 'Lys-9' (H3K9me3) or 'Lys-27' (H3K27me3) or when 'Lys-4' is monomethylated (H3K4me1) or dimethylated (H3K4me2). Also mediates deamination of methylated TAF10, a member of the transcription factor IID (TFIID) complex, which induces release of TAF10 from promoters, leading to inhibition of TFIID-dependent transcription. LOXL2-mediated deamination of TAF10 results in transcriptional repression of genes required for embryonic stem cell pluripotency. Involved in epithelial to mesenchymal transition (EMT) and participates in repression of E-cadherin, probably by mediating deamination of histone H3. When secreted into the extracellular matrix, promotes cross-linking of extracellular matrix proteins by mediating oxidative deamination of peptidyl lysine residues in precursors to fibrous collagen and elastin. Acts as a regulator of sprouting angiogenesis, probably via collagen IV scaffolding. Acts as a regulator of chondrocyte differentiation, probably by regulating expression of factors that control chondrocyte differentiation. Required with loxl2a for correct expression of Sox2 and for neural differentiation. The sequence is that of Lysyl oxidase homolog 2B (loxl2b) from Danio rerio (Zebrafish).